We begin with the raw amino-acid sequence, 74 residues long: Conotoxin Cal27 (74 aa).

An N-terminal signal peptide occupies residues 1 to 19; the sequence is MSGTGVLLLTLLLLVAMAA.

May contain 4 disulfide bonds. Expressed by the venom duct.

It localises to the secreted. Probable neurotoxin. This chain is Conotoxin Cal27, found in Californiconus californicus (California cone).